The following is a 295-amino-acid chain: Ribosomal protein L11 methyltransferase (295 aa).

S-adenosyl-L-methionine contacts are provided by Thr150, Gly171, Asp193, and Asn232.

It belongs to the methyltransferase superfamily. PrmA family.

It localises to the cytoplasm. The enzyme catalyses L-lysyl-[protein] + 3 S-adenosyl-L-methionine = N(6),N(6),N(6)-trimethyl-L-lysyl-[protein] + 3 S-adenosyl-L-homocysteine + 3 H(+). Methylates ribosomal protein L11. This Neisseria gonorrhoeae (strain ATCC 700825 / FA 1090) protein is Ribosomal protein L11 methyltransferase.